Reading from the N-terminus, the 224-residue chain is Serum amyloid P-component (224 aa).

An N-terminal signal peptide occupies residues 1-19; the sequence is MNKLMSWVSVLIILPEAFA. The region spanning 24–224 is the Pentraxin (PTX) domain; it reads RGKVFVFPRE…YVIVKPMVWG (201 aa). A glycan (N-linked (GlcNAc...) asparagine) is linked at Asn51. Cys55 and Cys114 form a disulfide bridge. Asp77, Asn78, Glu155, Gln156, and Asp157 together coordinate Ca(2+). The N-linked (GlcNAc...) asparagine glycan is linked to Asn166. Position 167 (Gln167) interacts with Ca(2+).

It belongs to the pentraxin family. In terms of assembly, homopentamer. Pentraxin (or pentaxin) have a discoid arrangement of 5 non-covalently bound subunits. Ca(2+) is required as a cofactor.

It is found in the secreted. The polypeptide is Serum amyloid P-component (APCS) (Bos taurus (Bovine)).